The primary structure comprises 381 residues: Alkanesulfonate monooxygenase (381 aa).

Belongs to the SsuD family. In terms of assembly, homotetramer.

It catalyses the reaction an alkanesulfonate + FMNH2 + O2 = an aldehyde + FMN + sulfite + H2O + 2 H(+). In terms of biological role, catalyzes the desulfonation of aliphatic sulfonates. This Escherichia fergusonii (strain ATCC 35469 / DSM 13698 / CCUG 18766 / IAM 14443 / JCM 21226 / LMG 7866 / NBRC 102419 / NCTC 12128 / CDC 0568-73) protein is Alkanesulfonate monooxygenase.